The following is a 315-amino-acid chain: ATP synthase gamma chain (315 aa).

Belongs to the ATPase gamma chain family. In terms of assembly, F-type ATPases have 2 components, CF(1) - the catalytic core - and CF(0) - the membrane proton channel. CF(1) has five subunits: alpha(3), beta(3), gamma(1), delta(1), epsilon(1). CF(0) has three main subunits: a, b and c.

It is found in the cellular thylakoid membrane. Its function is as follows. Produces ATP from ADP in the presence of a proton gradient across the membrane. The gamma chain is believed to be important in regulating ATPase activity and the flow of protons through the CF(0) complex. The protein is ATP synthase gamma chain of Nostoc punctiforme (strain ATCC 29133 / PCC 73102).